Reading from the N-terminus, the 262-residue chain is Ornithine carbamoyltransferase (262 aa).

Carbamoyl phosphate is bound by residues 3-7 (STRTR), Q30, R54, and 81-84 (HPTQ). Residues N114, D178, and 182–183 (SM) contribute to the L-ornithine site. Carbamoyl phosphate-binding positions include 219–222 (HCLP) and T247.

It belongs to the aspartate/ornithine carbamoyltransferase superfamily. OTCase family.

It is found in the cytoplasm. It catalyses the reaction carbamoyl phosphate + L-ornithine = L-citrulline + phosphate + H(+). It participates in amino-acid biosynthesis; L-arginine biosynthesis; L-arginine from L-ornithine and carbamoyl phosphate: step 1/3. Reversibly catalyzes the transfer of the carbamoyl group from carbamoyl phosphate (CP) to the N(epsilon) atom of ornithine (ORN) to produce L-citrulline. This is Ornithine carbamoyltransferase (argF) from Neisseria polysaccharea.